A 619-amino-acid chain; its full sequence is Guanylate cyclase soluble subunit beta-1 (619 aa).

H105 serves as a coordination point for heme. A Guanylate cyclase domain is found at 421-554; it reads TILFSGIVGF…NTVNLTSRTE (134 aa).

Belongs to the adenylyl cyclase class-4/guanylyl cyclase family. The active enzyme is formed by a heterodimer of an alpha and a beta subunit. Heterodimer with GUCY1A1. Can also form inactive homodimers in vitro. Requires heme as cofactor. Detected in brain cortex and cerebellum (at protein level).

The protein resides in the cytoplasm. It catalyses the reaction GTP = 3',5'-cyclic GMP + diphosphate. Its activity is regulated as follows. Activated by nitric oxide in the presence of magnesium or manganese ions. Mediates responses to nitric oxide (NO) by catalyzing the biosynthesis of the signaling molecule cGMP. The protein is Guanylate cyclase soluble subunit beta-1 of Homo sapiens (Human).